The primary structure comprises 199 residues: Protein MA_3591 (199 aa).

The AMMECR1 domain occupies 5-196 (TEGRVAVKLA…EKEPEGEVIE (192 aa)).

This chain is Protein MA_3591, found in Methanosarcina acetivorans (strain ATCC 35395 / DSM 2834 / JCM 12185 / C2A).